A 456-amino-acid polypeptide reads, in one-letter code: CCA-adding enzyme (456 aa).

Ser53 and Lys56 together coordinate ATP. CTP-binding residues include Ser53 and Lys56. The Mg(2+) site is built by Asp65, Asp67, and Asp119. Residues His142, Lys161, and Tyr170 each coordinate ATP. 3 residues coordinate CTP: His142, Lys161, and Tyr170.

Belongs to the tRNA nucleotidyltransferase/poly(A) polymerase family. Archaeal CCA-adding enzyme subfamily. In terms of assembly, homodimer. Mg(2+) serves as cofactor.

The enzyme catalyses a tRNA precursor + 2 CTP + ATP = a tRNA with a 3' CCA end + 3 diphosphate. It catalyses the reaction a tRNA with a 3' CCA end + 2 CTP + ATP = a tRNA with a 3' CCACCA end + 3 diphosphate. Catalyzes the addition and repair of the essential 3'-terminal CCA sequence in tRNAs without using a nucleic acid template. Adds these three nucleotides in the order of C, C, and A to the tRNA nucleotide-73, using CTP and ATP as substrates and producing inorganic pyrophosphate. tRNA 3'-terminal CCA addition is required both for tRNA processing and repair. Also involved in tRNA surveillance by mediating tandem CCA addition to generate a CCACCA at the 3' terminus of unstable tRNAs. While stable tRNAs receive only 3'-terminal CCA, unstable tRNAs are marked with CCACCA and rapidly degraded. The polypeptide is CCA-adding enzyme (Thermococcus kodakarensis (strain ATCC BAA-918 / JCM 12380 / KOD1) (Pyrococcus kodakaraensis (strain KOD1))).